A 124-amino-acid polypeptide reads, in one-letter code: UPF0102 protein Meso_4010 (124 aa).

This sequence belongs to the UPF0102 family.

The chain is UPF0102 protein Meso_4010 from Chelativorans sp. (strain BNC1).